The chain runs to 234 residues: Sugar fermentation stimulation protein homolog (234 aa).

The protein belongs to the SfsA family.

The chain is Sugar fermentation stimulation protein homolog from Shewanella baltica (strain OS195).